The following is a 328-amino-acid chain: D-cysteine desulfhydrase (328 aa).

Residue K51 is modified to N6-(pyridoxal phosphate)lysine.

Belongs to the ACC deaminase/D-cysteine desulfhydrase family. In terms of assembly, homodimer. Requires pyridoxal 5'-phosphate as cofactor.

It catalyses the reaction D-cysteine + H2O = hydrogen sulfide + pyruvate + NH4(+) + H(+). In terms of biological role, catalyzes the alpha,beta-elimination reaction of D-cysteine and of several D-cysteine derivatives. It could be a defense mechanism against D-cysteine. The polypeptide is D-cysteine desulfhydrase (Escherichia coli O6:H1 (strain CFT073 / ATCC 700928 / UPEC)).